Reading from the N-terminus, the 347-residue chain is NADH-ubiquinone oxidoreductase chain 2 (347 aa).

Transmembrane regions (helical) follow at residues 1 to 21 (MTPM…TLTL), 26 to 46 (WLLM…LLTY), 56 to 76 (AIKY…AASL), 96 to 116 (GIMT…YWVP), 153 to 171 (ILLT…NGLN), 178 to 198 (VMAY…IYFP), 199 to 219 (TLTT…FTVF), 237 to 257 (APIM…LPPL), 277 to 297 (IMAT…MRII), and 326 to 346 (LPTL…FITL).

This sequence belongs to the complex I subunit 2 family. Core subunit of respiratory chain NADH dehydrogenase (Complex I) which is composed of 45 different subunits. Interacts with TMEM242.

It is found in the mitochondrion inner membrane. It catalyses the reaction a ubiquinone + NADH + 5 H(+)(in) = a ubiquinol + NAD(+) + 4 H(+)(out). Its function is as follows. Core subunit of the mitochondrial membrane respiratory chain NADH dehydrogenase (Complex I) which catalyzes electron transfer from NADH through the respiratory chain, using ubiquinone as an electron acceptor. Essential for the catalytic activity and assembly of complex I. The protein is NADH-ubiquinone oxidoreductase chain 2 of Ornithorhynchus anatinus (Duckbill platypus).